Reading from the N-terminus, the 78-residue chain is Large ribosomal subunit protein bL28 (78 aa).

This sequence belongs to the bacterial ribosomal protein bL28 family.

This Histophilus somni (strain 129Pt) (Haemophilus somnus) protein is Large ribosomal subunit protein bL28.